A 264-amino-acid polypeptide reads, in one-letter code: Acetylglutamate kinase (264 aa).

Substrate contacts are provided by residues 50-51 (GG), Arg-72, and Asn-164.

It belongs to the acetylglutamate kinase family. ArgB subfamily.

The protein localises to the cytoplasm. It carries out the reaction N-acetyl-L-glutamate + ATP = N-acetyl-L-glutamyl 5-phosphate + ADP. The protein operates within amino-acid biosynthesis; L-arginine biosynthesis; N(2)-acetyl-L-ornithine from L-glutamate: step 2/4. Its function is as follows. Catalyzes the ATP-dependent phosphorylation of N-acetyl-L-glutamate. The sequence is that of Acetylglutamate kinase from Moritella profunda.